The chain runs to 210 residues: Large ribosomal subunit protein uL3 (210 aa).

The tract at residues 131-154 (GPMSHGSKYHRRVGSMGATTDPGR) is disordered.

Belongs to the universal ribosomal protein uL3 family. Part of the 50S ribosomal subunit. Forms a cluster with proteins L14 and L19.

Functionally, one of the primary rRNA binding proteins, it binds directly near the 3'-end of the 23S rRNA, where it nucleates assembly of the 50S subunit. This chain is Large ribosomal subunit protein uL3, found in Thermoanaerobacter pseudethanolicus (strain ATCC 33223 / 39E) (Clostridium thermohydrosulfuricum).